Reading from the N-terminus, the 137-residue chain is Sporulation-specific cell division protein SsgB (137 aa).

This sequence belongs to the SsgA family. As to quaternary structure, interacts with SsgA. Interacts with FtsZ (via N-terminus).

Its subcellular location is the cell septum. Functionally, involved in sporulation-specific cell division. Required for early stages of sporulation. Important in the process of growth cessation prior to sporulation-specific cell division. Recruits cell division protein FtsZ to the future septum sites and tethers the contractile ring structure (Z ring) to the cytoplasmic membrane during sporulation. Stimulates polymerization and filament length of FtsZ in vitro. The sequence is that of Sporulation-specific cell division protein SsgB from Streptomyces coelicolor (strain ATCC BAA-471 / A3(2) / M145).